A 373-amino-acid polypeptide reads, in one-letter code: UDP-N-acetylglucosamine--N-acetylmuramyl-(pentapeptide) pyrophosphoryl-undecaprenol N-acetylglucosamine transferase (373 aa).

UDP-N-acetyl-alpha-D-glucosamine is bound by residues 15-17 (TGG), Asn126, Arg170, Ser198, and Gln300.

This sequence belongs to the glycosyltransferase 28 family. MurG subfamily.

Its subcellular location is the cell inner membrane. The catalysed reaction is di-trans,octa-cis-undecaprenyl diphospho-N-acetyl-alpha-D-muramoyl-L-alanyl-D-glutamyl-meso-2,6-diaminopimeloyl-D-alanyl-D-alanine + UDP-N-acetyl-alpha-D-glucosamine = di-trans,octa-cis-undecaprenyl diphospho-[N-acetyl-alpha-D-glucosaminyl-(1-&gt;4)]-N-acetyl-alpha-D-muramoyl-L-alanyl-D-glutamyl-meso-2,6-diaminopimeloyl-D-alanyl-D-alanine + UDP + H(+). It participates in cell wall biogenesis; peptidoglycan biosynthesis. In terms of biological role, cell wall formation. Catalyzes the transfer of a GlcNAc subunit on undecaprenyl-pyrophosphoryl-MurNAc-pentapeptide (lipid intermediate I) to form undecaprenyl-pyrophosphoryl-MurNAc-(pentapeptide)GlcNAc (lipid intermediate II). The sequence is that of UDP-N-acetylglucosamine--N-acetylmuramyl-(pentapeptide) pyrophosphoryl-undecaprenol N-acetylglucosamine transferase from Methylobacterium nodulans (strain LMG 21967 / CNCM I-2342 / ORS 2060).